Reading from the N-terminus, the 251-residue chain is Glucosamine-6-phosphate deaminase (251 aa).

The active-site Proton acceptor; for enolization step is the Asp67. Residue Asn136 is the For ring-opening step of the active site. Catalysis depends on His138, which acts as the Proton acceptor; for ring-opening step. Glu143 (for ring-opening step) is an active-site residue.

Belongs to the glucosamine/galactosamine-6-phosphate isomerase family. NagB subfamily.

It catalyses the reaction alpha-D-glucosamine 6-phosphate + H2O = beta-D-fructose 6-phosphate + NH4(+). The protein operates within amino-sugar metabolism; N-acetylneuraminate degradation; D-fructose 6-phosphate from N-acetylneuraminate: step 5/5. In terms of biological role, catalyzes the reversible isomerization-deamination of glucosamine 6-phosphate (GlcN6P) to form fructose 6-phosphate (Fru6P) and ammonium ion. This is Glucosamine-6-phosphate deaminase from Geobacillus sp. (strain WCH70).